Consider the following 386-residue polypeptide: Succinate--CoA ligase [ADP-forming] subunit beta (386 aa).

ATP-binding positions include Lys46, 53-55 (GRG), Glu99, Gln102, and Glu107. 2 residues coordinate Mg(2+): Asn199 and Asp213. Substrate contacts are provided by residues Asn264 and 321–323 (GIV).

This sequence belongs to the succinate/malate CoA ligase beta subunit family. Heterotetramer of two alpha and two beta subunits. It depends on Mg(2+) as a cofactor.

The enzyme catalyses succinate + ATP + CoA = succinyl-CoA + ADP + phosphate. It catalyses the reaction GTP + succinate + CoA = succinyl-CoA + GDP + phosphate. It functions in the pathway carbohydrate metabolism; tricarboxylic acid cycle; succinate from succinyl-CoA (ligase route): step 1/1. Its function is as follows. Succinyl-CoA synthetase functions in the citric acid cycle (TCA), coupling the hydrolysis of succinyl-CoA to the synthesis of either ATP or GTP and thus represents the only step of substrate-level phosphorylation in the TCA. The beta subunit provides nucleotide specificity of the enzyme and binds the substrate succinate, while the binding sites for coenzyme A and phosphate are found in the alpha subunit. This is Succinate--CoA ligase [ADP-forming] subunit beta from Ruthia magnifica subsp. Calyptogena magnifica.